A 213-amino-acid chain; its full sequence is Glycerol-3-phosphate acyltransferase (213 aa).

Helical transmembrane passes span 3 to 23, 51 to 71, 78 to 98, 115 to 135, and 140 to 160; these read ILLAALVAYLIGSVSFAVVVS, KAAILTLVGDAFKGWIAVWLA, DVAIAWVAIAVFLGHLYPVFF, AVHPVLGLATALTWLIVAFFF, and LAALVAAVFAPVFDVFLFGMP.

It belongs to the PlsY family. In terms of assembly, probably interacts with PlsX.

Its subcellular location is the cell inner membrane. It carries out the reaction an acyl phosphate + sn-glycerol 3-phosphate = a 1-acyl-sn-glycero-3-phosphate + phosphate. It functions in the pathway lipid metabolism; phospholipid metabolism. In terms of biological role, catalyzes the transfer of an acyl group from acyl-phosphate (acyl-PO(4)) to glycerol-3-phosphate (G3P) to form lysophosphatidic acid (LPA). This enzyme utilizes acyl-phosphate as fatty acyl donor, but not acyl-CoA or acyl-ACP. This chain is Glycerol-3-phosphate acyltransferase, found in Burkholderia cenocepacia (strain HI2424).